Here is a 151-residue protein sequence, read N- to C-terminus: MLP-like protein 168 (151 aa).

The protein belongs to the MLP family.

The chain is MLP-like protein 168 (MLP168) from Arabidopsis thaliana (Mouse-ear cress).